The sequence spans 87 residues: Small ribosomal subunit protein bS16c (87 aa).

The protein belongs to the bacterial ribosomal protein bS16 family.

The protein localises to the plastid. Its subcellular location is the chloroplast. The sequence is that of Small ribosomal subunit protein bS16c from Zygnema circumcarinatum (Green alga).